A 276-amino-acid polypeptide reads, in one-letter code: Large ribosomal subunit protein uL2 (276 aa).

The tract at residues 224–276 is disordered; the sequence is AMNPVDHPLGGGEGKSSGGRHPVTPWGKPTKGYKTRNKKKPSSKLIVKRRGQK. Residues 254 to 276 are compositionally biased toward basic residues; it reads KGYKTRNKKKPSSKLIVKRRGQK.

This sequence belongs to the universal ribosomal protein uL2 family. As to quaternary structure, part of the 50S ribosomal subunit. Forms a bridge to the 30S subunit in the 70S ribosome.

One of the primary rRNA binding proteins. Required for association of the 30S and 50S subunits to form the 70S ribosome, for tRNA binding and peptide bond formation. It has been suggested to have peptidyltransferase activity; this is somewhat controversial. Makes several contacts with the 16S rRNA in the 70S ribosome. In Solidesulfovibrio magneticus (strain ATCC 700980 / DSM 13731 / RS-1) (Desulfovibrio magneticus), this protein is Large ribosomal subunit protein uL2.